The sequence spans 94 residues: Cystatin-A1 (94 aa).

The Secondary area of contact motif lies at 45 to 49; the sequence is QLVAG.

It belongs to the cystatin family.

The protein localises to the cytoplasm. Intracellular thiol proteinase inhibitor. Inhibits papain, but not cathepsin B. This Dictyostelium discoideum (Social amoeba) protein is Cystatin-A1 (cpiA).